Here is a 258-residue protein sequence, read N- to C-terminus: DNA repair protein RecO (258 aa).

This sequence belongs to the RecO family.

Its function is as follows. Involved in DNA repair and RecF pathway recombination. The protein is DNA repair protein RecO of Desulfatibacillum aliphaticivorans.